The chain runs to 267 residues: Putative transcription factor Ovo-like 1 (267 aa).

C2H2-type zinc fingers lie at residues 118-140, 146-168, 174-197, and 213-235; these read FTCH…MKCH, HLCT…VRTH, YKCS…KKIH, and YVCE…LKEH.

The protein localises to the nucleus. Its function is as follows. Putative transcription factor. Involved in hair formation and spermatogenesis. May function in the differentiation and/or maintenance of the urogenital system. In Bos taurus (Bovine), this protein is Putative transcription factor Ovo-like 1 (OVOL1).